Here is a 270-residue protein sequence, read N- to C-terminus: Regulatory protein RecX (270 aa).

This sequence belongs to the RecX family.

It is found in the cytoplasm. Functionally, modulates RecA activity. This Bacillus cytotoxicus (strain DSM 22905 / CIP 110041 / 391-98 / NVH 391-98) protein is Regulatory protein RecX.